We begin with the raw amino-acid sequence, 81 residues long: Small ribosomal subunit protein bS18 (81 aa).

It belongs to the bacterial ribosomal protein bS18 family. In terms of assembly, part of the 30S ribosomal subunit. Forms a tight heterodimer with protein bS6.

Functionally, binds as a heterodimer with protein bS6 to the central domain of the 16S rRNA, where it helps stabilize the platform of the 30S subunit. This Syntrophobacter fumaroxidans (strain DSM 10017 / MPOB) protein is Small ribosomal subunit protein bS18.